A 369-amino-acid polypeptide reads, in one-letter code: CASP-like protein 4U1 (369 aa).

The segment at 1-162 (MASTPRTPAP…RAETKLPLSS (162 aa)) is disordered. The Cytoplasmic segment spans residues 1–222 (MASTPRTPAP…AVAAVAERRE (222 aa)). Residues 7–23 (TPAPERSPPPVPTPPPP) show a composition bias toward pro residues. A compositionally biased stretch (basic and acidic residues) spans 36-51 (SPREEASFSSDGREGA). 2 stretches are compositionally biased toward low complexity: residues 87–96 (ANKAAAATAE) and 114–127 (SSQT…SPTP). A helical transmembrane segment spans residues 223 to 243 (LLLALRLATAVLSLAAFSVIA). Topologically, residues 244–262 (SARTSGWAGDYYARHLQYR) are extracellular. The helical transmembrane segment at 263 to 283 (YAVAVNVIVFAYSVAQSLGKI) threads the bilayer. At 284–300 (RHLVSPRFTFRTMSSYY) the chain is on the cytoplasmic side. The helical transmembrane segment at 301–321 (CSLFLDQVLAYLLMSASSAAA) threads the bilayer. The Extracellular segment spans residues 322–339 (SRNDLWVSRFGTDAFVRK). Residues 340–360 (ITGALWLSFVAFLVLALNAVI) form a helical membrane-spanning segment. Residues 361–369 (SXANLFSMV) are Cytoplasmic-facing.

It belongs to the Casparian strip membrane proteins (CASP) family. In terms of assembly, homodimer and heterodimers.

It localises to the cell membrane. In Zea mays (Maize), this protein is CASP-like protein 4U1.